The primary structure comprises 143 residues: Large-conductance mechanosensitive channel (143 aa).

The next 3 helical transmembrane spans lie at 10 to 30 (FAVK…GAFG), 40 to 60 (VIMP…LFLV), and 86 to 106 (GSFI…FMMV).

Belongs to the MscL family. Homopentamer.

Its subcellular location is the cell inner membrane. In terms of biological role, channel that opens in response to stretch forces in the membrane lipid bilayer. May participate in the regulation of osmotic pressure changes within the cell. The chain is Large-conductance mechanosensitive channel from Paracidovorax citrulli (strain AAC00-1) (Acidovorax citrulli).